The chain runs to 263 residues: Acetylglutamate kinase (263 aa).

Substrate-binding positions include 48–49 (GG), arginine 70, and asparagine 162.

This sequence belongs to the acetylglutamate kinase family. ArgB subfamily.

It is found in the cytoplasm. It carries out the reaction N-acetyl-L-glutamate + ATP = N-acetyl-L-glutamyl 5-phosphate + ADP. It functions in the pathway amino-acid biosynthesis; L-arginine biosynthesis; N(2)-acetyl-L-ornithine from L-glutamate: step 2/4. Its function is as follows. Catalyzes the ATP-dependent phosphorylation of N-acetyl-L-glutamate. The polypeptide is Acetylglutamate kinase (Vibrio vulnificus (strain YJ016)).